We begin with the raw amino-acid sequence, 563 residues long: Probable Xaa-Pro aminopeptidase PEPP (563 aa).

The Mn(2+) site is built by Asp331, Asp342, Glu491, and Glu532.

Belongs to the peptidase M24B family. The cofactor is Mn(2+).

The enzyme catalyses Release of any N-terminal amino acid, including proline, that is linked to proline, even from a dipeptide or tripeptide.. In terms of biological role, catalyzes the removal of a penultimate prolyl residue from the N-termini of peptides. This Verticillium alfalfae (strain VaMs.102 / ATCC MYA-4576 / FGSC 10136) (Verticillium wilt of alfalfa) protein is Probable Xaa-Pro aminopeptidase PEPP (PEPP).